Here is a 109-residue protein sequence, read N- to C-terminus: T cell receptor alpha variable 27 (109 aa).

The signal sequence occupies residues 1–19 (MVLKFSVSILWIQLAWVST). Residues 20–109 (QLLEQSPQFL…GDTGLYLCAG (90 aa)) enclose the Ig-like domain. 2 N-linked (GlcNAc...) asparagine glycosylation sites follow: N36 and N42. C41 and C107 form a disulfide bridge.

Alpha-beta TR is a heterodimer composed of an alpha and beta chain; disulfide-linked. The alpha-beta TR is associated with the transmembrane signaling CD3 coreceptor proteins to form the TR-CD3 (TcR or TCR). The assembly of alpha-beta TR heterodimers with CD3 occurs in the endoplasmic reticulum where a single alpha-beta TR heterodimer associates with one CD3D-CD3E heterodimer, one CD3G-CD3E heterodimer and one CD247 homodimer forming a stable octameric structure. CD3D-CD3E and CD3G-CD3E heterodimers preferentially associate with TR alpha and TR beta chains, respectively. The association of the CD247 homodimer is the last step of TcR assembly in the endoplasmic reticulum and is required for transport to the cell surface. As to quaternary structure, (Microbial infection) Interacts with Staphylococcus aureus enterotoxin H/entH.

Its subcellular location is the cell membrane. In terms of biological role, v region of the variable domain of T cell receptor (TR) alpha chain that participates in the antigen recognition. Alpha-beta T cell receptors are antigen specific receptors which are essential to the immune response and are present on the cell surface of T lymphocytes. Recognize peptide-major histocompatibility (MH) (pMH) complexes that are displayed by antigen presenting cells (APC), a prerequisite for efficient T cell adaptive immunity against pathogens. Binding of alpha-beta TR to pMH complex initiates TR-CD3 clustering on the cell surface and intracellular activation of LCK that phosphorylates the ITAM motifs of CD3G, CD3D, CD3E and CD247 enabling the recruitment of ZAP70. In turn, ZAP70 phosphorylates LAT, which recruits numerous signaling molecules to form the LAT signalosome. The LAT signalosome propagates signal branching to three major signaling pathways, the calcium, the mitogen-activated protein kinase (MAPK) kinase and the nuclear factor NF-kappa-B (NF-kB) pathways, leading to the mobilization of transcription factors that are critical for gene expression and essential for T cell growth and differentiation. The T cell repertoire is generated in the thymus, by V-(D)-J rearrangement. This repertoire is then shaped by intrathymic selection events to generate a peripheral T cell pool of self-MH restricted, non-autoaggressive T cells. Post-thymic interaction of alpha-beta TR with the pMH complexes shapes TR structural and functional avidity. The sequence is that of T cell receptor alpha variable 27 from Homo sapiens (Human).